The chain runs to 77 residues: U8-hexatoxin-Mg1a (77 aa).

The first 22 residues, 1 to 22, serve as a signal peptide directing secretion; sequence MKVFSFTIGLVVIISLFAFALA. Positions 23-43 are excised as a propeptide; sequence YDEETDLMKKLVEMERAIEQR. 3 disulfides stabilise this stretch: cysteine 46-cysteine 60, cysteine 53-cysteine 65, and cysteine 59-cysteine 76.

In terms of tissue distribution, expressed by the venom gland.

It localises to the secreted. Its function is as follows. Intrathorax injection into crickets causes paralysis prolonged for more than 60 minutes, followed by recovery. The sequence is that of U8-hexatoxin-Mg1a from Macrothele gigas (Japanese funnel web spider).